Here is a 124-residue protein sequence, read N- to C-terminus: CLAVATA3/ESR (CLE)-related protein 45 (124 aa).

An N-terminal signal peptide occupies residues 1-20 (MLGSSTRSMFFLLVCIGLLA). 2 N-linked (GlcNAc...) asparagine glycosylation sites follow: Asn25 and Asn96. A coiled-coil region spans residues 71-109 (LNKNRRVLEEVNKDKIKAEETQERKNKTEDSFKSSKRRV). The span at 87 to 103 (KAEETQERKNKTEDSFK) shows a compositional bias: basic and acidic residues. Positions 87–124 (KAEETQERKNKTEDSFKSSKRRVRRGSDPIHNKAQPFS) are disordered.

This sequence belongs to the CLV3/ESR signal peptide family. As to quaternary structure, binds to SKM1 present in the pollen grain, particularly under relatively high temperature (at 30 degrees Celsius). Interacts with BAM3, especially in roots. As to expression, expressed at low levels in flowers, especially in pistils. Present in vascular tissues. In roots, confined to protophloem and sieve element precursor cells.

It localises to the secreted. The protein resides in the extracellular space. Extracellular signal peptide that regulates cell fate. Represses root apical meristem maintenance. Represses protophloem differentiation in a BAM3-dependent manner. BRX, BAM3, and CLE45 act together to regulate the transition of protophloem cells from proliferation to differentiation, thus impinging on postembryonic growth capacity of the root meristem; this signaling pathway requires CRN and CLV2 and involves MAKR5 for its transduction/amplification. Triggers the accumulation of MAKR5 in developing sieve elements in a BAM3-dependent manner. Prevents, in a dose-dependent manner, auxin response in the root meristem thus leading in the repression of protophloem differentiation and periclinal sieve element precursor cell division. Promotes pollen tube growth prolongation in a SKM1 and SKM2-dependent manner, especially under relatively high temperature (at 30 degrees Celsius), thus conferring tolerance against high temperature probably through the maintenance of mitochondrial activity. Alleviates mitochondrial decay pollen tube in vitro culture. The sequence is that of CLAVATA3/ESR (CLE)-related protein 45 from Arabidopsis thaliana (Mouse-ear cress).